Consider the following 378-residue polypeptide: Probable pectin lyase A (378 aa).

The signal sequence occupies residues 1–18; that stretch reads MKYASFLALVGFITSTSA. 2 disulfide bridges follow: cysteine 81–cysteine 100 and cysteine 90–cysteine 224. Residue arginine 254 is part of the active site. Residues cysteine 321 and cysteine 329 are joined by a disulfide bond.

Belongs to the polysaccharide lyase 1 family.

The protein localises to the secreted. It catalyses the reaction Eliminative cleavage of (1-&gt;4)-alpha-D-galacturonan methyl ester to give oligosaccharides with 4-deoxy-6-O-methyl-alpha-D-galact-4-enuronosyl groups at their non-reducing ends.. Functionally, pectinolytic enzymes consist of four classes of enzymes: pectin lyase, polygalacturonase, pectin methylesterase and rhamnogalacturonase. Among pectinolytic enzymes, pectin lyase is the most important in depolymerization of pectin, since it cleaves internal glycosidic bonds of highly methylated pectins. This Aspergillus clavatus (strain ATCC 1007 / CBS 513.65 / DSM 816 / NCTC 3887 / NRRL 1 / QM 1276 / 107) protein is Probable pectin lyase A (pelA).